A 329-amino-acid polypeptide reads, in one-letter code: 4-hydroxythreonine-4-phosphate dehydrogenase (329 aa).

The substrate site is built by histidine 136 and threonine 137. The a divalent metal cation site is built by histidine 166, histidine 211, and histidine 266. Residues lysine 274, asparagine 283, and arginine 292 each coordinate substrate.

It belongs to the PdxA family. As to quaternary structure, homodimer. Requires Zn(2+) as cofactor. Mg(2+) is required as a cofactor. It depends on Co(2+) as a cofactor.

Its subcellular location is the cytoplasm. The enzyme catalyses 4-(phosphooxy)-L-threonine + NAD(+) = 3-amino-2-oxopropyl phosphate + CO2 + NADH. The protein operates within cofactor biosynthesis; pyridoxine 5'-phosphate biosynthesis; pyridoxine 5'-phosphate from D-erythrose 4-phosphate: step 4/5. In terms of biological role, catalyzes the NAD(P)-dependent oxidation of 4-(phosphooxy)-L-threonine (HTP) into 2-amino-3-oxo-4-(phosphooxy)butyric acid which spontaneously decarboxylates to form 3-amino-2-oxopropyl phosphate (AHAP). In Shigella flexneri serotype 5b (strain 8401), this protein is 4-hydroxythreonine-4-phosphate dehydrogenase.